Consider the following 153-residue polypeptide: UPF0756 membrane protein LCA_1031 (153 aa).

Helical transmembrane passes span 4 to 24 (WLFL…SLII), 52 to 72 (WGVT…QIGF), 85 to 105 (FIAV…VGLL), and 115 to 135 (LVFG…GPVI).

Belongs to the UPF0756 family.

Its subcellular location is the cell membrane. The sequence is that of UPF0756 membrane protein LCA_1031 from Latilactobacillus sakei subsp. sakei (strain 23K) (Lactobacillus sakei subsp. sakei).